A 433-amino-acid chain; its full sequence is Glutamate-1-semialdehyde 2,1-aminomutase (433 aa).

Residue Lys269 is modified to N6-(pyridoxal phosphate)lysine.

This sequence belongs to the class-III pyridoxal-phosphate-dependent aminotransferase family. HemL subfamily. As to quaternary structure, homodimer. The cofactor is pyridoxal 5'-phosphate.

The protein localises to the cytoplasm. The catalysed reaction is (S)-4-amino-5-oxopentanoate = 5-aminolevulinate. Its pathway is porphyrin-containing compound metabolism; protoporphyrin-IX biosynthesis; 5-aminolevulinate from L-glutamyl-tRNA(Glu): step 2/2. The sequence is that of Glutamate-1-semialdehyde 2,1-aminomutase from Renibacterium salmoninarum (strain ATCC 33209 / DSM 20767 / JCM 11484 / NBRC 15589 / NCIMB 2235).